The primary structure comprises 320 residues: Cytochrome f (320 aa).

Residues 1-35 (MQTRNTFSWIREEITRSISVSLMIYIITWASISSA) form the signal peptide. 4 residues coordinate heme: Tyr-36, Cys-56, Cys-59, and His-60. A helical transmembrane segment spans residues 286–305 (VQGLLFFLGSVVLAQIFLVL).

Belongs to the cytochrome f family. The 4 large subunits of the cytochrome b6-f complex are cytochrome b6, subunit IV (17 kDa polypeptide, petD), cytochrome f and the Rieske protein, while the 4 small subunits are PetG, PetL, PetM and PetN. The complex functions as a dimer. It depends on heme as a cofactor. In terms of processing, purified from leaves as a water-soluble monomeric protein with a mass of 28.16 kDa, cleavage occurs after Gln-287 and separates the heme-binding from the membrane.

The protein resides in the plastid. Its subcellular location is the chloroplast thylakoid membrane. Its function is as follows. Component of the cytochrome b6-f complex, which mediates electron transfer between photosystem II (PSII) and photosystem I (PSI), cyclic electron flow around PSI, and state transitions. The chain is Cytochrome f (petA) from Brassica rapa subsp. rapa (Turnip).